We begin with the raw amino-acid sequence, 46 residues long: Amine oxidase [flavin-containing] A (46 aa).

Belongs to the flavin monoamine oxidase family. In terms of assembly, monomer, homo- or heterodimer (containing two subunits of similar size). Each subunit contains a covalently bound flavin. Enzymatically active as monomer. FAD is required as a cofactor.

The protein localises to the mitochondrion outer membrane. The catalysed reaction is a secondary aliphatic amine + O2 + H2O = a primary amine + an aldehyde + H2O2. The enzyme catalyses a primary methyl amine + O2 + H2O = an aldehyde + H2O2 + NH4(+). It carries out the reaction (R)-adrenaline + O2 + H2O = (R)-3,4-dihydroxymandelaldehyde + methylamine + H2O2. It catalyses the reaction dopamine + O2 + H2O = 3,4-dihydroxyphenylacetaldehyde + H2O2 + NH4(+). The catalysed reaction is tyramine + O2 + H2O = (4-hydroxyphenyl)acetaldehyde + H2O2 + NH4(+). The enzyme catalyses (R)-noradrenaline + O2 + H2O = (R)-3,4-dihydroxymandelaldehyde + H2O2 + NH4(+). It carries out the reaction serotonin + O2 + H2O = (5-hydroxyindol-3-yl)acetaldehyde + H2O2 + NH4(+). It catalyses the reaction kynuramine + O2 + H2O = 3-(2-aminophenyl)-3-oxopropanal + H2O2 + NH4(+). The catalysed reaction is tryptamine + O2 + H2O = indole-3-acetaldehyde + H2O2 + NH4(+). The enzyme catalyses 2-phenylethylamine + O2 + H2O = 2-phenylacetaldehyde + H2O2 + NH4(+). Its function is as follows. Catalyzes the oxidative deamination of primary and some secondary amine such as neurotransmitters, with concomitant reduction of oxygen to hydrogen peroxide and has important functions in the metabolism of neuroactive and vasoactive amines in the central nervous system and peripheral tissues. Preferentially oxidizes serotonin. Also catalyzes the oxidative deamination of kynuramine to 3-(2-aminophenyl)-3-oxopropanal that can spontaneously condense to 4-hydroxyquinoline. The chain is Amine oxidase [flavin-containing] A from Ovis aries (Sheep).